The sequence spans 1714 residues: Latrophilin Cirl (1714 aa).

The Extracellular portion of the chain corresponds to 1 to 765 (MSSIDISGRY…LFTMFDGNMR (765 aa)). In terms of domain architecture, SUEL-type lectin spans 26–115 (ACEGKKLTIE…KYLEAHYQCI (90 aa)). Asparagine 143 is a glycosylation site (N-linked (GlcNAc...) asparagine). The segment at 183-302 (PPHTVTHSTP…GSPASGNNSV (120 aa)) is disordered. The span at 186-198 (TVTHSTPSSSTVP) shows a compositional bias: low complexity. The segment covering 244-262 (PSSKLPSAGNATAPSNTRI) has biased composition (polar residues). A glycan (N-linked (GlcNAc...) asparagine) is linked at asparagine 253. Composition is skewed to low complexity over residues 272 to 282 (DDGTLLTTKSS) and 290 to 301 (ASNGSPASGNNS). Residues asparagine 299, asparagine 338, asparagine 395, asparagine 652, asparagine 701, and asparagine 728 are each glycosylated (N-linked (GlcNAc...) asparagine). Positions 373 to 397 (YDEYDDDPSSTTPAPSGGDCLHNSS) are disordered. Residues 558 to 752 (RSVVQKVKNI…AILMDVVDEH (195 aa)) form the GAIN-B domain. 2 disulfide bridges follow: cysteine 707-cysteine 734 and cysteine 722-cysteine 736. The GPS stretch occupies residues 707 to 752 (CVFWNYIDHAWSANGCSLESTNRTHSVCSCNHLTNFAILMDVVDEH). A helical membrane pass occupies residues 766 to 786 (VFIYISIAICVVFIVIALLTL). Over 787–799 (KLFNGVFVKSART) the chain is Cytoplasmic. The helical transmembrane segment at 800 to 820 (TIYTSIYVCLLAIELLFLLGI) threads the bilayer. The Extracellular portion of the chain corresponds to 821–826 (EQTETS). A helical membrane pass occupies residues 827–847 (IFCGFITVFLHCAILSGAAWF). Residues 848–873 (CYEAFHSYYTLTSDELLVEVDQTPKV) are Cytoplasmic-facing. The helical transmembrane segment at 874 to 894 (NWYYLLSYGLSVSVVAISVAI) threads the bilayer. Over 895 to 911 (NPSTYTQNDYCVLMEAN) the chain is Extracellular. Residues 912-932 (ILFYATFVAPVLIFFVAAIGY) form a helical membrane-spanning segment. Topologically, residues 933–966 (TFLSWIIMCRKSCTGLKTKEHTRLASVRFDIRCS) are cytoplasmic. The helical transmembrane segment at 967-987 (FVFLLLLSAVWCSAYFYLRGA) threads the bilayer. Topologically, residues 988–994 (KTDEDTT) are extracellular. Residues 995–1015 (TIYGYCFICFNTLLGLYIFVF) traverse the membrane as a helical segment. At 1016–1714 (HCIQNEKIRR…VRCYLEPLAK (699 aa)) the chain is on the cytoplasmic side. Phosphoserine is present on residues serine 1155, serine 1245, and serine 1252. 5 disordered regions span residues 1229 to 1253 (PNSQHGKKKRGGAVPASPSGSLHSR), 1268 to 1287 (KTKQGQPSGYPHYAEALDPP), 1293 to 1354 (AFYQ…PPPH), 1447 to 1536 (GGGS…DERM), and 1551 to 1694 (FQRQ…QQRH). Over residues 1296 to 1315 (QQQQQMRRQQQQQQQQQQQQ) the composition is skewed to low complexity. Phosphoserine is present on residues serine 1317 and serine 1318. Low complexity-rich tracts occupy residues 1330–1348 (LHLQHQQQHQRRVGGQQQL) and 1453–1478 (GGSVSSRSQQQQLQKQQKQQQQQQQR). Acidic residues-rich tracts occupy residues 1486 to 1500 (DDDDDDDEEEDDEAT) and 1510 to 1523 (CDDDDEEEDSDLDD). The segment covering 1524–1536 (DAHKLPPQSDERM) has biased composition (basic and acidic residues). Positions 1565–1580 (GALPPGVAPGAGSAGP) are enriched in low complexity. Residues 1644 to 1659 (QTPAQKRQQLQKLSPQ) show a composition bias toward polar residues. Residues 1660 to 1675 (STTSSSSHTSHSNLQP) are compositionally biased toward low complexity. The segment covering 1679 to 1693 (PLTHQHPHPPQHQQR) has biased composition (basic residues).

Belongs to the G-protein coupled receptor 2 family. LN-TM7 subfamily. In terms of assembly, forms a heterodimer, consisting of a large extracellular region non-covalently linked to a seven-transmembrane moiety. Proteolytically cleaved into 2 subunits, an extracellular subunit and a seven-transmembrane subunit.

It is found in the cell membrane. The polypeptide is Latrophilin Cirl (Drosophila ananassae (Fruit fly)).